The following is a 303-amino-acid chain: Bifunctional protein FolD 2 (303 aa).

Residues 169–171, S194, and I235 each bind NADP(+); that span reads GRS.

The protein belongs to the tetrahydrofolate dehydrogenase/cyclohydrolase family. In terms of assembly, homodimer.

The catalysed reaction is (6R)-5,10-methylene-5,6,7,8-tetrahydrofolate + NADP(+) = (6R)-5,10-methenyltetrahydrofolate + NADPH. The enzyme catalyses (6R)-5,10-methenyltetrahydrofolate + H2O = (6R)-10-formyltetrahydrofolate + H(+). It participates in one-carbon metabolism; tetrahydrofolate interconversion. Catalyzes the oxidation of 5,10-methylenetetrahydrofolate to 5,10-methenyltetrahydrofolate and then the hydrolysis of 5,10-methenyltetrahydrofolate to 10-formyltetrahydrofolate. In Ectopseudomonas mendocina (strain ymp) (Pseudomonas mendocina), this protein is Bifunctional protein FolD 2.